The primary structure comprises 622 residues: Sodium-dependent serotonin transporter (622 aa).

The tract at residues 1–53 is disordered; the sequence is MDRSGSSDFAGAAATTGRSNPAPWSDDKESPNNEDDSNEDDGDHTTPAKVTDP. The Cytoplasmic portion of the chain corresponds to 1 to 82; the sequence is MDRSGSSDFA…TRETWGQKAE (82 aa). The segment covering 32–42 has biased composition (acidic residues); that stretch reads NNEDDSNEDDG. Transmembrane regions (helical) follow at residues 83-103, 111-130, and 155-175; these read FLLA…FPYI, AFLV…LFYM, and GVGY…NTII. Glycine 89, alanine 91, valine 92, and asparagine 96 together coordinate Na(+). The Extracellular segment spans residues 176–244; the sequence is GWAVYYLFAS…NGLDFMGPVK (69 aa). Cysteines 195 and 204 form a disulfide. N-linked (GlcNAc...) asparagine glycosylation is present at asparagine 211. 5 helical membrane-spanning segments follow: residues 245 to 263, 272 to 289, 325 to 342, 354 to 375, and 408 to 427; these read PTLA…FSLW, VVWV…ILLV, IFFS…LSSY, LITS…FSVL, and MSGS…TLGL. Na(+) is bound by residues serine 328, asparagine 360, leucine 425, aspartate 428, and serine 429. 4 helical membrane passes run 455–473, 489–509, 530–549, and 568–586; these read LFVL…PTMT, GLAI…FYGV, ICWT…FSIM, and VGWA…YIIY. The Cytoplasmic portion of the chain corresponds to 587-622; sequence KFFFASKGGCRQRLQESFQPEDNCGSVVPGQQGTSV.

This sequence belongs to the sodium:neurotransmitter symporter (SNF) (TC 2.A.22) family. Expression is specific to cell bodies in the ventral ganglion of the embryonic and larval nervous system.

It localises to the cell membrane. Terminates the action of serotonin by its high affinity sodium-dependent reuptake into presynaptic terminals. The chain is Sodium-dependent serotonin transporter (SerT) from Drosophila melanogaster (Fruit fly).